The chain runs to 314 residues: NADH-ubiquinone oxidoreductase chain 2 (314 aa).

The next 9 membrane-spanning stretches (helical) occupy residues 13 to 35, 61 to 80, 85 to 107, 117 to 139, 144 to 166, 189 to 209, 224 to 244, 246 to 266, and 294 to 314; these read LGVMLIGTILSVSSEELVGVWLG, YFVVQSTGSILMLVGFVSLM, VSGLVMSTAXTVLKSGVFPLHSW, WLASGLMLTWQKVAPLVFLSMIL, LWVVIVSMAGIGAVGGLNQNSVR, VVFVGYFAVYSLSVGLFFYGC, AASGMGLLMLMGMPPFLGFLA, VLVFLMSGSPVIVACIMGSVI, and IWSLVICMNIMGGALILVSFI.

Belongs to the complex I subunit 2 family.

The protein resides in the mitochondrion inner membrane. It carries out the reaction a ubiquinone + NADH + 5 H(+)(in) = a ubiquinol + NAD(+) + 4 H(+)(out). Functionally, core subunit of the mitochondrial membrane respiratory chain NADH dehydrogenase (Complex I) that is believed to belong to the minimal assembly required for catalysis. Complex I functions in the transfer of electrons from NADH to the respiratory chain. The immediate electron acceptor for the enzyme is believed to be ubiquinone. The protein is NADH-ubiquinone oxidoreductase chain 2 (ND2) of Mytilus edulis (Blue mussel).